Consider the following 291-residue polypeptide: 4-hydroxy-tetrahydrodipicolinate synthase (291 aa).

T45 contributes to the pyruvate binding site. The active-site Proton donor/acceptor is the Y133. The active-site Schiff-base intermediate with substrate is the K161. Residue I203 coordinates pyruvate.

This sequence belongs to the DapA family. Homotetramer; dimer of dimers.

Its subcellular location is the cytoplasm. The enzyme catalyses L-aspartate 4-semialdehyde + pyruvate = (2S,4S)-4-hydroxy-2,3,4,5-tetrahydrodipicolinate + H2O + H(+). The protein operates within amino-acid biosynthesis; L-lysine biosynthesis via DAP pathway; (S)-tetrahydrodipicolinate from L-aspartate: step 3/4. Its function is as follows. Catalyzes the condensation of (S)-aspartate-beta-semialdehyde [(S)-ASA] and pyruvate to 4-hydroxy-tetrahydrodipicolinate (HTPA). This chain is 4-hydroxy-tetrahydrodipicolinate synthase, found in Teredinibacter turnerae (strain ATCC 39867 / T7901).